A 397-amino-acid polypeptide reads, in one-letter code: Aurora kinase A (397 aa).

A disordered region spans residues 1-118; sequence MDRCKENCVS…SIQKTEDSKK (118 aa). Composition is skewed to polar residues over residues 29-55 and 84-102; these read QIPS…SQRV and RLSN…SGNN. Residues serine 40 and serine 50 each carry the phosphoserine modification. Residues 103-118 show a composition bias toward basic and acidic residues; that stretch reads SEKEQTSIQKTEDSKK. The 251-residue stretch at 126–376 folds into the Protein kinase domain; that stretch reads FDIGRPLGKG…LAEVLEHPWI (251 aa). ATP contacts are provided by residues lysine 136, lysine 155, and 203-206; that span reads LEYA. Aspartate 249 functions as the Proton acceptor in the catalytic mechanism. A Glycyl lysine isopeptide (Lys-Gly) (interchain with G-Cter in SUMO2) cross-link involves residue lysine 251. ATP contacts are provided by residues 253-254 and aspartate 267; that span reads EN. The activation segment stretch occupies residues 273-286; sequence HAPSSRRTTLCGTL. A phosphothreonine mark is found at threonine 280 and threonine 281. Serine 335 carries the phosphoserine; by PKA and PAK modification. Residues 378 to 387 show a composition bias toward polar residues; the sequence is ANSSKPPTGH. The tract at residues 378-397 is disordered; it reads ANSSKPPTGHNSKEATSKSS. Residues 388-397 show a composition bias toward basic and acidic residues; the sequence is NSKEATSKSS.

This sequence belongs to the protein kinase superfamily. Ser/Thr protein kinase family. Aurora subfamily. As to quaternary structure, part of a complex composed of NEDD9, AURKA and CTTN; within the complex NEDD9 acts as a scaffold protein and is required for complex formation. Identified in a complex with AUNIP and NIN. Interacts with CPEB1, JTB, TACC1, TPX2, PPP2CA, as well as with the protein phosphatase type 1 (PP1) isoforms PPP1CA, PPP1CB and PPP1CC. Also interacts with its substrates ARHGEF2, BORA, KIF2A, PARD3, and p53/TP53. Interaction with BORA promotes phosphorylation of PLK1. Interacts with FBXL7 and CIMAP3. Interacts with GADD45A, competing with its oligomerization. Interacts (via C-terminus) with AUNIP (via C-terminus). Interacts with SIRT2. Interacts with FRY; this interaction facilitates AURKA-mediated PLK1 phosphorylation. Interacts with MYCN; interaction is phospho-independent and triggers AURKA activation; AURKA competes with FBXW7 for binding to unphosphorylated MYCN but not for binding to phosphorylated MYCN. Interacts with HNRNPU. Interacts with AAAS. Interacts with KLHL18 and CUL3. Interacts with FOXP1. Interacts with HDAC6; AURKA-mediated phosphorylation of HDAC6 promotes deacetylation of alpha-tubulin. In terms of processing, activated by phosphorylation at Thr-281; this brings about a change in the conformation of the activation segment. Phosphorylation at Thr-281 varies during the cell cycle and is highest during M phase. Autophosphorylated at Thr-281 upon TPX2 binding. Thr-281 can be phosphorylated by several kinases, including PAK and PKA. Protein phosphatase type 1 (PP1) binds AURKA and inhibits its activity by dephosphorylating Thr-281 during mitosis. Phosphorylation at Ser-335 decreases the kinase activity. PPP2CA controls degradation by dephosphorylating Ser-52 at the end of mitosis. Phosphorylated in embryonic brain neurons. Post-translationally, ubiquitinated by CHFR, leading to its degradation by the proteasome. Ubiquitinated by the anaphase-promoting complex (APC), leading to its degradation by the proteasome. Ubiquitinated by the E3 ubiquitin-protein ligase complex SCF(FBXL7) during mitosis, leading to its degradation by the proteasome. Ubiquitinated by the CUL3-KLHL18 ligase leading to its activation at the centrosome which is required for initiating mitotic entry. Ubiquitination mediated by CUL3-KLHL18 ligase does not lead to its degradation by the proteasome. As to expression, detected in neurons in brain cortex and hippocampus (at protein level). Expressed in mammary gland and tumor.

It is found in the cytoplasm. It localises to the cytoskeleton. The protein resides in the microtubule organizing center. The protein localises to the centrosome. Its subcellular location is the spindle pole. It is found in the centriole. It localises to the cell projection. The protein resides in the neuron projection. The protein localises to the cilium. Its subcellular location is the cilium basal body. It is found in the basolateral cell membrane. The enzyme catalyses L-seryl-[protein] + ATP = O-phospho-L-seryl-[protein] + ADP + H(+). It carries out the reaction L-threonyl-[protein] + ATP = O-phospho-L-threonyl-[protein] + ADP + H(+). With respect to regulation, activation of CDK1, appears to be an upstream event of AURKA activation. Phosphatase inhibitor-2 (PPP1R2) and TPX2 act also as activators. Inactivated by the G2 checkpoint. Inhibited by GADD45A and p53/TP53, and through dephosphorylation by protein phosphatase type 1 (PP1). MLN8054 is also a potent and selective inhibitor. Activated during the early phase of cilia disassembly in the presence of FBXL7 and CIMAP3. Inhibited by the small molecule inhibitor VX-680. Its function is as follows. Mitotic serine/threonine kinase that contributes to the regulation of cell cycle progression. Associates with the centrosome and the spindle microtubules during mitosis and plays a critical role in various mitotic events including the establishment of mitotic spindle, centrosome duplication, centrosome separation as well as maturation, chromosomal alignment, spindle assembly checkpoint, and cytokinesis. Required for normal spindle positioning during mitosis and for the localization of NUMA1 and DCTN1 to the cell cortex during metaphase. Required for initial activation of CDK1 at centrosomes. Phosphorylates numerous target proteins, including ARHGEF2, BORA, BRCA1, CDC25B, DLGP5, HDAC6, KIF2A, LATS2, NDEL1, PARD3, PPP1R2, PLK1, RASSF1, TACC3, p53/TP53 and TPX2. Phosphorylates MCRS1 which is required for MCRS1-mediated kinetochore fiber assembly and mitotic progression. Regulates KIF2A tubulin depolymerase activity. Required for normal axon formation. Plays a role in microtubule remodeling during neurite extension. Important for microtubule formation and/or stabilization. Also acts as a key regulatory component of the p53/TP53 pathway, and particularly the checkpoint-response pathways critical for oncogenic transformation of cells, by phosphorylating and stabilizating p53/TP53. Phosphorylates its own inhibitors, the protein phosphatase type 1 (PP1) isoforms, to inhibit their activity. Inhibits cilia outgrowth. Required for cilia disassembly via phosphorylation of HDAC6 and subsequent deacetylation of alpha-tubulin. Regulates protein levels of the anti-apoptosis protein BIRC5 by suppressing the expression of the SCF(FBXL7) E3 ubiquitin-protein ligase substrate adapter FBXL7 through the phosphorylation of the transcription factor FOXP1. This chain is Aurora kinase A, found in Rattus norvegicus (Rat).